The following is a 141-amino-acid chain: Large ribosomal subunit protein uL11 (141 aa).

It belongs to the universal ribosomal protein uL11 family. In terms of assembly, part of the ribosomal stalk of the 50S ribosomal subunit. Interacts with L10 and the large rRNA to form the base of the stalk. L10 forms an elongated spine to which L12 dimers bind in a sequential fashion forming a multimeric L10(L12)X complex. Post-translationally, one or more lysine residues are methylated.

Functionally, forms part of the ribosomal stalk which helps the ribosome interact with GTP-bound translation factors. This is Large ribosomal subunit protein uL11 from Chlorobaculum parvum (strain DSM 263 / NCIMB 8327) (Chlorobium vibrioforme subsp. thiosulfatophilum).